The primary structure comprises 200 residues: Peptidyl-tRNA hydrolase (200 aa).

Tyr17 contributes to the tRNA binding site. His22 serves as the catalytic Proton acceptor. TRNA is bound by residues Tyr78, Asn80, and Asn126.

This sequence belongs to the PTH family. As to quaternary structure, monomer.

The protein localises to the cytoplasm. The catalysed reaction is an N-acyl-L-alpha-aminoacyl-tRNA + H2O = an N-acyl-L-amino acid + a tRNA + H(+). Hydrolyzes ribosome-free peptidyl-tRNAs (with 1 or more amino acids incorporated), which drop off the ribosome during protein synthesis, or as a result of ribosome stalling. In terms of biological role, catalyzes the release of premature peptidyl moieties from peptidyl-tRNA molecules trapped in stalled 50S ribosomal subunits, and thus maintains levels of free tRNAs and 50S ribosomes. This is Peptidyl-tRNA hydrolase from Cutibacterium acnes (strain DSM 16379 / KPA171202) (Propionibacterium acnes).